Here is a 410-residue protein sequence, read N- to C-terminus: 2-oxoglutarate-dependent dioxygenase AOP3 (410 aa).

A Fe2OG dioxygenase domain is found at 258-355; sequence GNASVGAKEA…RYAAALFSNP (98 aa). Fe cation-binding residues include His-278, Asp-280, and His-335. Arg-346 is a 2-oxoglutarate binding site.

It belongs to the iron/ascorbate-dependent oxidoreductase family. It depends on Fe(2+) as a cofactor.

2-oxoglutarate-dependent dioxygenase involved in glucosinolates biosynthesis. Catalyzes the conversion of methylsulfinylalkyl glucosinolates to hydroxyalkyl glucosinolates. The sequence is that of 2-oxoglutarate-dependent dioxygenase AOP3 (AOP3) from Arabidopsis thaliana (Mouse-ear cress).